Consider the following 142-residue polypeptide: Transmembrane protein 170A (142 aa).

Residues 1–48 (MEGGGGGLGGEPGLLQQILSLRLVPRVGNVTDCQRATLCSFPEMWYGV) are Lumenal-facing. The N-linked (GlcNAc...) asparagine glycan is linked to Asn-29. A helical transmembrane segment spans residues 49–69 (FLWALVSSLFFHIPAGLLALF). Over 70 to 78 (TLRHHKYGR) the chain is Cytoplasmic. The chain crosses the membrane as a helical span at residues 79–99 (FMSVGIFLMGVLGPISAGILT). The Lumenal portion of the chain corresponds to 100-114 (SAAIAGVYKAAGKEM). The chain crosses the membrane as a helical span at residues 115-135 (IPFEALVLGVGQTFCVLIVSF). Topologically, residues 136–142 (LRILATL) are cytoplasmic.

It belongs to the TMEM170 family.

It is found in the endoplasmic reticulum membrane. It localises to the nucleus envelope. May regulate membrane morphogenesis in the endoplasmic reticulum (ER) by promoting ER sheet formation at the expense of ER tubules. The protein is Transmembrane protein 170A (tmem170a) of Xenopus laevis (African clawed frog).